A 158-amino-acid polypeptide reads, in one-letter code: Endoribonuclease YbeY (158 aa).

Zn(2+)-binding residues include His-119, His-123, and His-129.

Belongs to the endoribonuclease YbeY family. The cofactor is Zn(2+).

The protein resides in the cytoplasm. In terms of biological role, single strand-specific metallo-endoribonuclease involved in late-stage 70S ribosome quality control and in maturation of the 3' terminus of the 16S rRNA. The protein is Endoribonuclease YbeY of Shewanella sediminis (strain HAW-EB3).